Consider the following 652-residue polypeptide: DNA ligase (652 aa).

Residues 29–33 (DSEYD), 78–79 (SL), and E107 contribute to the NAD(+) site. K109 (N6-AMP-lysine intermediate) is an active-site residue. NAD(+) is bound by residues R130, E164, K278, and K302. Zn(2+) is bound by residues C395, C398, C413, and C418. Positions 577–652 (VADAALSGLT…VRDEAWLESL (76 aa)) constitute a BRCT domain.

It belongs to the NAD-dependent DNA ligase family. LigA subfamily. The cofactor is Mg(2+). Requires Mn(2+) as cofactor.

The catalysed reaction is NAD(+) + (deoxyribonucleotide)n-3'-hydroxyl + 5'-phospho-(deoxyribonucleotide)m = (deoxyribonucleotide)n+m + AMP + beta-nicotinamide D-nucleotide.. DNA ligase that catalyzes the formation of phosphodiester linkages between 5'-phosphoryl and 3'-hydroxyl groups in double-stranded DNA using NAD as a coenzyme and as the energy source for the reaction. It is essential for DNA replication and repair of damaged DNA. The chain is DNA ligase from Streptococcus pneumoniae serotype 4 (strain ATCC BAA-334 / TIGR4).